The primary structure comprises 463 residues: ATP-dependent protease ATPase subunit HslU (463 aa).

Residues Ile-19 and 61–66 each bind ATP; that span reads GVGKTE. The interval 154–174 is disordered; that stretch reads FGGAQNSSQTSDTQEDGEIEK. Residues Asp-277, Glu-341, and Arg-413 each contribute to the ATP site.

This sequence belongs to the ClpX chaperone family. HslU subfamily. As to quaternary structure, a double ring-shaped homohexamer of HslV is capped on each side by a ring-shaped HslU homohexamer. The assembly of the HslU/HslV complex is dependent on binding of ATP.

It localises to the cytoplasm. Functionally, ATPase subunit of a proteasome-like degradation complex; this subunit has chaperone activity. The binding of ATP and its subsequent hydrolysis by HslU are essential for unfolding of protein substrates subsequently hydrolyzed by HslV. HslU recognizes the N-terminal part of its protein substrates and unfolds these before they are guided to HslV for hydrolysis. In Bacillus cereus (strain G9842), this protein is ATP-dependent protease ATPase subunit HslU.